The primary structure comprises 101 residues: UPF0751 protein DSY3086 (101 aa).

The protein belongs to the UPF0751 family.

The protein is UPF0751 protein DSY3086 of Desulfitobacterium hafniense (strain Y51).